We begin with the raw amino-acid sequence, 467 residues long: ATP-dependent protease ATPase subunit HslU (467 aa).

Residues Val-22 and 64–69 (GVGKTE) contribute to the ATP site. The disordered stretch occupies residues 149–192 (QTNNPLESLFGGAIPNFGQNNEDEEEPPTEEIKTKRSEIKRQLE). The segment covering 178–192 (EEIKTKRSEIKRQLE) has biased composition (basic and acidic residues). ATP is bound by residues Asp-280, Glu-345, and Arg-417.

Belongs to the ClpX chaperone family. HslU subfamily. In terms of assembly, a double ring-shaped homohexamer of HslV is capped on each side by a ring-shaped HslU homohexamer. The assembly of the HslU/HslV complex is dependent on binding of ATP.

It is found in the cytoplasm. In terms of biological role, ATPase subunit of a proteasome-like degradation complex; this subunit has chaperone activity. The binding of ATP and its subsequent hydrolysis by HslU are essential for unfolding of protein substrates subsequently hydrolyzed by HslV. HslU recognizes the N-terminal part of its protein substrates and unfolds these before they are guided to HslV for hydrolysis. The chain is ATP-dependent protease ATPase subunit HslU from Staphylococcus aureus (strain Mu3 / ATCC 700698).